The chain runs to 435 residues: GPI-anchor transamidase component PIGU (435 aa).

Topologically, residues 2-3 are cytoplasmic; the sequence is AA. A helical transmembrane segment spans residues 4-22; it reads PLVLVLVVAVTVRAALFRS. The Lumenal segment spans residues 23 to 78; sequence SLAEFISERVEVVSPLSSWKRVVEGLSLLDLGVSPYSGAVFHETPLIIYLFHFLID. A helical membrane pass occupies residues 79–99; sequence YAELVFMITDALTAIALYFAI. Residues 100-136 are Cytoplasmic-facing; it reads QDFNKVVFKKQKLLLELDQYAPDVAELIRTPMEMRYI. The next 4 membrane-spanning stretches (helical) occupy residues 137-158, 159-178, 179-194, and 195-205; these read PLKV…VAKS, TCAI…IKGS, AFLS…YQSL, and YPLTLFVPGLL. At 206–222 the chain is on the cytoplasmic side; the sequence is YLLQRQYIPVKMKSKAF. A cardiolipin is bound by residues lysine 216 and methionine 217. A helical membrane pass occupies residues 223-244; the sequence is WIFSWEYAMMYVGSLVVIICLS. The Lumenal portion of the chain corresponds to 245-286; it reads FFLLSSWDFIPAVYGFILSVPDLTPNIGLFWYFFAEMFEHFS. The chain crosses the membrane as a helical span at residues 287-306; that stretch reads LFFVCVFQINVFFYTIPLAI. The Cytoplasmic segment spans residues 307–311; sequence KLKEH. Lysine 309 lines the a cardiolipin pocket. Transmembrane regions (helical) follow at residues 312–331 and 332–345; these read PIFF…SYPT and VGDV…FPVW. Topologically, residues 346–354 are cytoplasmic; the sequence is NHLYRFLRN. The chain crosses the membrane as a helical span at residues 355 to 372; sequence IFVLTCIIIVCSLLFPVL. Residues 373–384 lie on the Lumenal side of the membrane; that stretch reads WHLWIYAGSANS. A 2-acyl-6-[6-phosphoethanolamine-alpha-D-mannosyl-(1-&gt;2)-6-phosphoethanolamine-alpha-D-mannosyl-(1-&gt;6)-2-phosphoethanolamine-alpha-D-mannosyl-(1-&gt;4)-alpha-D-glucosaminyl]-1-(1-radyl,2-acyl-sn-glycero-3-phospho)-1D-myo-inositol contacts are provided by asparagine 383 and asparagine 385. Residues 385–406 form a helical membrane-spanning segment; the sequence is NFFYAITLTFNVGQILLISDYF. Over 407-435 the chain is Cytoplasmic; it reads YAFLRREYYLTHGLYLTAKDGTEAMLVLK.

This sequence belongs to the PIGU family. In terms of assembly, heteropentamer. Part of the GPI-anchor transamidase complex, consisting of PIGK, PIGT, PIGS, PIGU and GAA1.

The protein resides in the endoplasmic reticulum membrane. Its pathway is glycolipid biosynthesis; glycosylphosphatidylinositol-anchor biosynthesis. Component of the glycosylphosphatidylinositol-anchor (GPI-anchor) transamidase (GPI-T) complex that catalyzes the formation of the linkage between a proprotein and a GPI-anchor and participates in GPI anchored protein biosynthesis. Binds the lipid portion of GPI-anchor. May act as an organizer in the transmembrane layer to recruit other subunits, and thus is essential for assembly of the complex. In Homo sapiens (Human), this protein is GPI-anchor transamidase component PIGU.